The primary structure comprises 418 residues: Putative O-antigen transporter (418 aa).

Transmembrane regions (helical) follow at residues 8–28, 37–57, 85–105, 124–144, 165–185, 217–237, 251–271, 297–317, 334–354, 362–382, and 385–405; these read VWNLFGYAIPTLIAIPSLGFL, FGVYTIAIALVGYAGIFDVGL, FLVLFSCFGAFLLLIFSDGIV, LLAICIPLFILNQLWSAILEG, IPAIFVFYSATLSAAVAGLIF, LFFFGGWMTVSNIISPVMVYF, VAFYSAPAEVILKLGIIPAAI, LLMFLICLPVIIIGLLYSGLV, LNVLLIGFFFNALAMIPFSAI, ITALIHCAELVPYLALLYFMV, and YGLLGAAISWSIRVILDALLL.

The protein belongs to the polysaccharide synthase family.

Its subcellular location is the cell inner membrane. Its pathway is bacterial outer membrane biogenesis; lipopolysaccharide biosynthesis. In terms of biological role, could be an O-antigen transporter. In Shigella flexneri, this protein is Putative O-antigen transporter (rfbE).